Here is a 323-residue protein sequence, read N- to C-terminus: Aldo-keto reductase family 1 member C3 (323 aa).

Residues Gly20–Tyr24 and Asp50 contribute to the NADP(+) site. The Proton donor role is filled by Tyr55. His117 lines the substrate pocket. Residues Ser166–Asn167, Gln190, Tyr216–Ser221, and Lys270–Asn280 contribute to the NADP(+) site.

The protein belongs to the aldo/keto reductase family.

The protein localises to the cytoplasm. The catalysed reaction is a 3alpha-hydroxysteroid + NADP(+) = a 3-oxosteroid + NADPH + H(+). The enzyme catalyses a 3alpha-hydroxysteroid + NAD(+) = a 3-oxosteroid + NADH + H(+). It catalyses the reaction prostaglandin F2alpha + NADP(+) = prostaglandin D2 + NADPH + H(+). It carries out the reaction testosterone + NAD(+) = androst-4-ene-3,17-dione + NADH + H(+). The catalysed reaction is testosterone + NADP(+) = androst-4-ene-3,17-dione + NADPH + H(+). The enzyme catalyses prostaglandin F2alpha + NADP(+) = prostaglandin H2 + NADPH + H(+). It catalyses the reaction prostaglandin D2 + NADPH + H(+) = 11beta-prostaglandin F2 + NADP(+). It carries out the reaction prostaglandin D2-ethanolamide + NADPH + H(+) = 11beta-prostaglandin F2-ethanolamide + NADP(+). The catalysed reaction is 17beta-estradiol + NADP(+) = estrone + NADPH + H(+). The enzyme catalyses 17beta-estradiol + NAD(+) = estrone + NADH + H(+). It catalyses the reaction (20S)-hydroxypregn-4-en-3-one + NADP(+) = progesterone + NADPH + H(+). It carries out the reaction (20S)-hydroxypregn-4-en-3-one + NAD(+) = progesterone + NADH + H(+). The catalysed reaction is 5alpha-androstane-3alpha,17beta-diol + NADP(+) = 17beta-hydroxy-5alpha-androstan-3-one + NADPH + H(+). The enzyme catalyses 5alpha-androstane-3alpha,17beta-diol + NAD(+) = 17beta-hydroxy-5alpha-androstan-3-one + NADH + H(+). It catalyses the reaction androsterone + NADPH + H(+) = 5alpha-androstane-3alpha,17beta-diol + NADP(+). It carries out the reaction 5alpha-androstane-3alpha,17beta-diol + NAD(+) = androsterone + NADH + H(+). The catalysed reaction is 5alpha-androstane-3beta,17beta-diol + NADP(+) = 17beta-hydroxy-5alpha-androstan-3-one + NADPH + H(+). The enzyme catalyses 9-cis-retinol + NADP(+) = 9-cis-retinal + NADPH + H(+). The protein operates within steroid metabolism. Functionally, cytosolic aldo-keto reductase that catalyzes the NADH and NADPH-dependent reduction of ketosteroids to hydroxysteroids. Acts as a NAD(P)(H)-dependent 3-, 17- and 20-ketosteroid reductase on the steroid nucleus and side chain and regulates the metabolism of androgens, estrogens and progesterone. Displays the ability to catalyze both oxidation and reduction in vitro, but most probably acts as a reductase in vivo since the oxidase activity measured in vitro is inhibited by physiological concentration of NADPH. Acts preferentially as a 17-ketosteroid reductase and has the highest catalytic efficiency of the AKR1C enzyme for the reduction of delta4-androstenedione to form testosterone. Reduces prostaglandin (PG) D2 to 11beta-prostaglandin F2, progesterone to 20alpha-hydroxyprogesterone and estrone to 17beta-estradiol. Catalyzes the transformation of the potent androgen dihydrotestosterone (DHT) into the less active form, 5-alpha-androstan-3-alpha,17-beta-diol (3-alpha-diol). Also displays retinaldehyde reductase activity toward 9-cis-retinal. The polypeptide is Aldo-keto reductase family 1 member C3 (AKR1C3) (Pongo abelii (Sumatran orangutan)).